Reading from the N-terminus, the 217-residue chain is Protein-L-isoaspartate O-methyltransferase (217 aa).

Residue Ser64 is part of the active site.

It belongs to the methyltransferase superfamily. L-isoaspartyl/D-aspartyl protein methyltransferase family.

The protein localises to the cytoplasm. It catalyses the reaction [protein]-L-isoaspartate + S-adenosyl-L-methionine = [protein]-L-isoaspartate alpha-methyl ester + S-adenosyl-L-homocysteine. In terms of biological role, catalyzes the methyl esterification of L-isoaspartyl residues in peptides and proteins that result from spontaneous decomposition of normal L-aspartyl and L-asparaginyl residues. It plays a role in the repair and/or degradation of damaged proteins. This chain is Protein-L-isoaspartate O-methyltransferase, found in Rhodopseudomonas palustris (strain BisB5).